The sequence spans 353 residues: Melanin-concentrating hormone receptor 1 (353 aa).

Residues 1–26 (MDLQTSLLSTGPNASNISDGQDNLTL) are disordered. Over 1–45 (MDLQTSLLSTGPNASNISDGQDNLTLPGSPPRTGSVSYINIIMPS) the chain is Extracellular. Residues Asn13, Asn16, and Asn23 are each glycosylated (N-linked (GlcNAc...) asparagine). A helical membrane pass occupies residues 46–66 (VFGTICLLGIVGNSTVIFAVV). Topologically, residues 67–79 (KKSKLHWCSNVPD) are cytoplasmic. A helical membrane pass occupies residues 80–100 (IFIINLSVVDLLFLLGMPFMI). Topologically, residues 101 to 116 (HQLMGNGVWHFGETMC) are extracellular. Cys116 and Cys194 are disulfide-bonded. Residues 117-139 (TLITAMDANSQFTSTYILTAMTI) traverse the membrane as a helical segment. Over 140 to 161 (DRYLATVHPISSTKFRKPSMAT) the chain is Cytoplasmic. Residues 162–182 (LVICLLWALSFISITPVWLYA) traverse the membrane as a helical segment. Over 183 to 204 (RLIPFPGGAVGCGIRLPNPDTD) the chain is Extracellular. A helical transmembrane segment spans residues 205–225 (LYWFTLYQFFLAFALPFVVIT). The Cytoplasmic portion of the chain corresponds to 226–256 (AAYVKILQRMTSSVAPASQRSIRLRTKRVTR). The helical transmembrane segment at 257-277 (TAIAICLVFFVCWAPYYVLQL) threads the bilayer. The Extracellular portion of the chain corresponds to 278-294 (TQLSISRPTLTFVYLYN). A helical membrane pass occupies residues 295-315 (AAISLGYANSCLNPFVYIVLC). Residues 316-353 (ETFRKRLVLSVKPAAQGQLRTVSNAQTADEERTESKGT) lie on the Cytoplasmic side of the membrane.

The protein belongs to the G-protein coupled receptor 1 family. As to quaternary structure, interacts with NCDN. As to expression, high level in the brain, moderate amounts in the eye and skeletal muscle, and small amounts in tongue and pituitary.

It localises to the cell membrane. Receptor for melanin-concentrating hormone, coupled to G proteins that inhibit adenylyl cyclase. The chain is Melanin-concentrating hormone receptor 1 from Rattus norvegicus (Rat).